Here is a 569-residue protein sequence, read N- to C-terminus: Alpha-amylase (569 aa).

Residues 1–28 (MARKTVAAALALVAGAAVAVTGNAPAQA) form the signal peptide. Ca(2+)-binding residues include Asn120, Gln166, and Asp175. Asp205 serves as the catalytic Nucleophile. Residue His209 participates in Ca(2+) binding. Glu232 acts as the Proton donor in catalysis. The CBM20 domain maps to 468 to 569 (TTPPATSGAS…QLVLNDTFRS (102 aa)).

Belongs to the glycosyl hydrolase 13 family. Monomer. Ca(2+) serves as cofactor.

It catalyses the reaction Endohydrolysis of (1-&gt;4)-alpha-D-glucosidic linkages in polysaccharides containing three or more (1-&gt;4)-alpha-linked D-glucose units.. In Streptomyces violaceus (Streptomyces venezuelae), this protein is Alpha-amylase (aml).